The chain runs to 677 residues: uncharacterized protein (677 aa).

The disordered stretch occupies residues 1 to 87 (MGRHSKPDPE…PTGAEPIAAA (87 aa)). The span at 17–29 (SDGHAAEQQHWED) shows a compositional bias: basic and acidic residues. The span at 51-64 (GHYSAVGGYSASGS) shows a compositional bias: low complexity. The next 4 membrane-spanning stretches (helical) occupy residues 115-135 (VSIG…GVIL), 192-212 (VAVA…IGKW), 313-333 (EAVA…IGAV), and 474-494 (ATLA…IMLD).

Its subcellular location is the cell membrane. This is an uncharacterized protein from Mycobacterium tuberculosis (strain CDC 1551 / Oshkosh).